The sequence spans 425 residues: Meiotic recombination protein spo-11 (425 aa).

The tract at residues 1 to 38 is disordered; that stretch reads MYEYSFNPNIDHEPGSVESQQSTIYSDSDDSDDSFLDD. One can recognise a Topo IIA-type catalytic domain in the interval 15–158; it reads GSVESQQSTI…LNILSCGRGI (144 aa). The span at 27 to 38 shows a compositional bias: acidic residues; the sequence is DSDDSDDSFLDD. Tyrosine 119 functions as the O-(5'-phospho-DNA)-tyrosine intermediate in the catalytic mechanism. Positions 202 and 255 each coordinate Mg(2+).

Belongs to the TOP6A family. It depends on Mg(2+) as a cofactor.

The protein localises to the nucleus. It catalyses the reaction ATP-dependent breakage, passage and rejoining of double-stranded DNA.. Its function is as follows. Required for meiotic recombination. Mediates DNA cleavage that forms the double-strand breaks (DSB) that initiate meiotic recombination. In Caenorhabditis elegans, this protein is Meiotic recombination protein spo-11 (spo-11).